Reading from the N-terminus, the 445-residue chain is MSKKYFGTDGIRGRVGEYPITPDFMLKLGWAAGMAFRKMGACKVLVGKDTRISGYMFESALEAGLTSAGADVMLLGPMPTPAIAYLSRTFQAEAGIVISASHNPHDDNGIKFFSGKGTKLPDELELMIEELLDTPMTVVESSKIGKVSRINDASGRYIEFCKSSVPTGTSFSGLRIVIDCAHGATYKVAPSVFRELGAEVVVLSAQPNGLNINDNCGSTHMGQLQAAVLSEHADLGIAFDGDGDRVLMVDHTGAIVDGDELLYIIARDLHERGKLQGGVVGTLMSNLGLELALADLGIPFVRANVGDRYVIAELLERNWLVGGENSGHVVCFNHTTTGDAIIAALQVLMALKTRNEGLAQTRQALRKCPQVLINVRFGGGESPLEHPAVKEASARVTQAMAGRGRVLLRKSGTEPLVRVMVEGEDESQVRGYAEELAKLVTEVSA.

Ser101 serves as the catalytic Phosphoserine intermediate. Residues Ser101, Asp240, Asp242, and Asp244 each coordinate Mg(2+). Residue Ser101 is modified to Phosphoserine.

The protein belongs to the phosphohexose mutase family. Mg(2+) is required as a cofactor. In terms of processing, activated by phosphorylation.

It carries out the reaction alpha-D-glucosamine 1-phosphate = D-glucosamine 6-phosphate. In terms of biological role, catalyzes the conversion of glucosamine-6-phosphate to glucosamine-1-phosphate. This chain is Phosphoglucosamine mutase, found in Pseudomonas fluorescens (strain Pf0-1).